The sequence spans 261 residues: Cytochrome c oxidase subunit 3 (261 aa).

The Mitochondrial matrix segment spans residues 1–15 (MTHQTHAYHMVNPSP). Residues 16–34 (WPLTGALSALLMTSGLIMW) form a helical membrane-spanning segment. Topologically, residues 35–40 (FHFNST) are mitochondrial intermembrane. The chain crosses the membrane as a helical span at residues 41–66 (TLLTLGLTTNMLTMYQWWRDVIREST). The Mitochondrial matrix segment spans residues 67-72 (FQGHHT). A helical membrane pass occupies residues 73-105 (PTVQKGLRYGMILFIISEVLFFTGFFWAFYHSS). The Mitochondrial intermembrane segment spans residues 106–128 (LAPTPELGGCWPPTGIHPLNPLE). The chain crosses the membrane as a helical span at residues 129–152 (VPLLNTSVLLASGVSITWAHHSLM). The Mitochondrial matrix portion of the chain corresponds to 153 to 155 (EGN). A helical membrane pass occupies residues 156 to 183 (RNPMLQALFITIALGIYFTLLQASEYYE). Residues 184–190 (APFTISD) lie on the Mitochondrial intermembrane side of the membrane. Residues 191-223 (GVYGSTFFVATGFHGLHVIIGSTFLIVCFFRQL) form a helical membrane-spanning segment. Residues 224 to 232 (KFHFTSNHH) lie on the Mitochondrial matrix side of the membrane. A helical membrane pass occupies residues 233–256 (FGFEAAAWYWHFVDVVWLFLYVSI). The Mitochondrial intermembrane portion of the chain corresponds to 257–261 (YWWGS).

This sequence belongs to the cytochrome c oxidase subunit 3 family. Component of the cytochrome c oxidase (complex IV, CIV), a multisubunit enzyme composed of 14 subunits. The complex is composed of a catalytic core of 3 subunits MT-CO1, MT-CO2 and MT-CO3, encoded in the mitochondrial DNA, and 11 supernumerary subunits COX4I, COX5A, COX5B, COX6A, COX6B, COX6C, COX7A, COX7B, COX7C, COX8 and NDUFA4, which are encoded in the nuclear genome. The complex exists as a monomer or a dimer and forms supercomplexes (SCs) in the inner mitochondrial membrane with NADH-ubiquinone oxidoreductase (complex I, CI) and ubiquinol-cytochrome c oxidoreductase (cytochrome b-c1 complex, complex III, CIII), resulting in different assemblies (supercomplex SCI(1)III(2)IV(1) and megacomplex MCI(2)III(2)IV(2)).

The protein resides in the mitochondrion inner membrane. The enzyme catalyses 4 Fe(II)-[cytochrome c] + O2 + 8 H(+)(in) = 4 Fe(III)-[cytochrome c] + 2 H2O + 4 H(+)(out). Functionally, component of the cytochrome c oxidase, the last enzyme in the mitochondrial electron transport chain which drives oxidative phosphorylation. The respiratory chain contains 3 multisubunit complexes succinate dehydrogenase (complex II, CII), ubiquinol-cytochrome c oxidoreductase (cytochrome b-c1 complex, complex III, CIII) and cytochrome c oxidase (complex IV, CIV), that cooperate to transfer electrons derived from NADH and succinate to molecular oxygen, creating an electrochemical gradient over the inner membrane that drives transmembrane transport and the ATP synthase. Cytochrome c oxidase is the component of the respiratory chain that catalyzes the reduction of oxygen to water. Electrons originating from reduced cytochrome c in the intermembrane space (IMS) are transferred via the dinuclear copper A center (CU(A)) of subunit 2 and heme A of subunit 1 to the active site in subunit 1, a binuclear center (BNC) formed by heme A3 and copper B (CU(B)). The BNC reduces molecular oxygen to 2 water molecules using 4 electrons from cytochrome c in the IMS and 4 protons from the mitochondrial matrix. The chain is Cytochrome c oxidase subunit 3 (MT-CO3) from Madoqua guentheri (Guenther's dik-dik).